We begin with the raw amino-acid sequence, 445 residues long: Plasmid recombination enzyme (445 aa).

Residues Y45 and Y113 each coordinate DNA.

The protein belongs to the plasmid mobilization pre family.

The protein is Plasmid recombination enzyme of Bacillus thuringiensis.